Consider the following 154-residue polypeptide: 3-hydroxyacyl-[acyl-carrier-protein] dehydratase FabZ (154 aa).

Residue histidine 54 is part of the active site.

The protein belongs to the thioester dehydratase family. FabZ subfamily.

Its subcellular location is the cytoplasm. It catalyses the reaction a (3R)-hydroxyacyl-[ACP] = a (2E)-enoyl-[ACP] + H2O. Its function is as follows. Involved in unsaturated fatty acids biosynthesis. Catalyzes the dehydration of short chain beta-hydroxyacyl-ACPs and long chain saturated and unsaturated beta-hydroxyacyl-ACPs. The protein is 3-hydroxyacyl-[acyl-carrier-protein] dehydratase FabZ of Shewanella putrefaciens (strain CN-32 / ATCC BAA-453).